The following is a 29-amino-acid chain: Cysteine-rich venom protein 25-A (29 aa).

It belongs to the CRISP family. Contains 8 disulfide bonds. As to expression, expressed by the venom gland.

It is found in the secreted. The sequence is that of Cysteine-rich venom protein 25-A from Naja haje haje (Egyptian cobra).